We begin with the raw amino-acid sequence, 183 residues long: Cyanate hydratase (183 aa).

Residues Arg-118, Glu-121, and Ser-144 contribute to the active site.

Belongs to the cyanase family.

The enzyme catalyses cyanate + hydrogencarbonate + 3 H(+) = NH4(+) + 2 CO2. Its function is as follows. Catalyzes the reaction of cyanate with bicarbonate to produce ammonia and carbon dioxide. This Cryptococcus neoformans var. neoformans serotype D (strain B-3501A) (Filobasidiella neoformans) protein is Cyanate hydratase.